Here is a 222-residue protein sequence, read N- to C-terminus: ATP synthase F(0) complex subunit a (222 aa).

6 helical membrane-spanning segments follow: residues Phe-8–Pro-28, Trp-64–Leu-84, Gln-93–Phe-113, Gln-127–Ile-147, Ile-160–Ile-180, and Ile-197–His-219.

The protein belongs to the ATPase A chain family. As to quaternary structure, component of the ATP synthase complex composed at least of ATP5F1A/subunit alpha, ATP5F1B/subunit beta, ATP5MC1/subunit c (homooctomer), MT-ATP6/subunit a, MT-ATP8/subunit 8, ATP5ME/subunit e, ATP5MF/subunit f, ATP5MG/subunit g, ATP5MK/subunit k, ATP5MJ/subunit j, ATP5F1C/subunit gamma, ATP5F1D/subunit delta, ATP5F1E/subunit epsilon, ATP5PF/subunit F6, ATP5PB/subunit b, ATP5PD/subunit d, ATP5PO/subunit OSCP. ATP synthase complex consists of a soluble F(1) head domain (subunits alpha(3) and beta(3)) - the catalytic core - and a membrane F(0) domain - the membrane proton channel (subunits c, a, 8, e, f, g, k and j). These two domains are linked by a central stalk (subunits gamma, delta, and epsilon) rotating inside the F1 region and a stationary peripheral stalk (subunits F6, b, d, and OSCP). Interacts with DNAJC30; interaction is direct.

The protein resides in the mitochondrion inner membrane. The catalysed reaction is H(+)(in) = H(+)(out). Functionally, subunit a, of the mitochondrial membrane ATP synthase complex (F(1)F(0) ATP synthase or Complex V) that produces ATP from ADP in the presence of a proton gradient across the membrane which is generated by electron transport complexes of the respiratory chain. ATP synthase complex consist of a soluble F(1) head domain - the catalytic core - and a membrane F(1) domain - the membrane proton channel. These two domains are linked by a central stalk rotating inside the F(1) region and a stationary peripheral stalk. During catalysis, ATP synthesis in the catalytic domain of F(1) is coupled via a rotary mechanism of the central stalk subunits to proton translocation. With the subunit c (ATP5MC1), forms the proton-conducting channel in the F(0) domain, that contains two crucial half-channels (inlet and outlet) that facilitate proton movement from the mitochondrial intermembrane space (IMS) into the matrix. Protons are taken up via the inlet half-channel and released through the outlet half-channel, following a Grotthuss mechanism. This chain is ATP synthase F(0) complex subunit a, found in Loxodonta africana (African elephant).